Reading from the N-terminus, the 640-residue chain is Chaperone protein DnaK (640 aa).

Thr196 is modified (phosphothreonine; by autocatalysis). 2 disordered regions span residues 510–530 and 598–640; these read NDAK…ETKN and AADA…DKDK.

This sequence belongs to the heat shock protein 70 family.

In terms of biological role, acts as a chaperone. This Prosthecochloris aestuarii (strain DSM 271 / SK 413) protein is Chaperone protein DnaK.